The primary structure comprises 305 residues: UDP-N-acetylenolpyruvoylglucosamine reductase 2 (305 aa).

The region spanning valine 33–glycine 197 is the FAD-binding PCMH-type domain. The active site involves arginine 176. Serine 226 functions as the Proton donor in the catalytic mechanism. The active site involves glutamate 296.

It belongs to the MurB family. FAD serves as cofactor.

The protein localises to the cytoplasm. It carries out the reaction UDP-N-acetyl-alpha-D-muramate + NADP(+) = UDP-N-acetyl-3-O-(1-carboxyvinyl)-alpha-D-glucosamine + NADPH + H(+). It participates in cell wall biogenesis; peptidoglycan biosynthesis. Cell wall formation. The polypeptide is UDP-N-acetylenolpyruvoylglucosamine reductase 2 (Bacillus thuringiensis subsp. konkukian (strain 97-27)).